We begin with the raw amino-acid sequence, 432 residues long: 3-phosphoshikimate 1-carboxyvinyltransferase (432 aa).

3 residues coordinate 3-phosphoshikimate: lysine 23, serine 24, and arginine 28. Lysine 23 lines the phosphoenolpyruvate pocket. Phosphoenolpyruvate contacts are provided by glycine 95 and arginine 123. 3-phosphoshikimate is bound by residues serine 167, glutamine 169, aspartate 317, and lysine 344. Glutamine 169 lines the phosphoenolpyruvate pocket. The active-site Proton acceptor is the aspartate 317. Positions 348 and 390 each coordinate phosphoenolpyruvate.

Belongs to the EPSP synthase family. In terms of assembly, monomer.

The protein localises to the cytoplasm. The catalysed reaction is 3-phosphoshikimate + phosphoenolpyruvate = 5-O-(1-carboxyvinyl)-3-phosphoshikimate + phosphate. Its pathway is metabolic intermediate biosynthesis; chorismate biosynthesis; chorismate from D-erythrose 4-phosphate and phosphoenolpyruvate: step 6/7. Catalyzes the transfer of the enolpyruvyl moiety of phosphoenolpyruvate (PEP) to the 5-hydroxyl of shikimate-3-phosphate (S3P) to produce enolpyruvyl shikimate-3-phosphate and inorganic phosphate. The sequence is that of 3-phosphoshikimate 1-carboxyvinyltransferase from Staphylococcus aureus (strain N315).